The chain runs to 194 residues: Prefoldin subunit 3 (194 aa).

This sequence belongs to the prefoldin subunit alpha family. In terms of assembly, heterohexamer of two PFD-alpha type and four PFD-beta type subunits. Interacts with itself. Interacts with Vhl and betaTub56D/tubulin beta-1 chain. Interacts with tubulin alpha-beta heterodimers by itself or in complex with Vhl. Does not interact with microtubules (MTs). Expressed in larval central nervous system (CNS) and pupal testis (at protein level).

The protein localises to the cytoplasm. Binds specifically to cytosolic chaperonin (c-CPN) and transfers target proteins to it. Binds to nascent polypeptide chain and promotes folding in an environment in which there are many competing pathways for nonnative proteins. Required for tubulin stability and spindle and centrosome formation in cooperation with Vhl. This Drosophila melanogaster (Fruit fly) protein is Prefoldin subunit 3 (mgr).